Consider the following 299-residue polypeptide: Probable transport accessory protein MmpS3 (299 aa).

Residues 1 to 72 (MSGPNPPGRE…EHVTGGPYVP (72 aa)) form a disordered region. A helical transmembrane segment spans residues 101 to 121 (VVGVAAIIAAVALVVSVSLLV). Residues 128 to 139 (KLATGDTTSSAP) are compositionally biased toward polar residues. The tract at residues 128–213 (KLATGDTTSS…TTTTPTGPRQ (86 aa)) is disordered. Over residues 150 to 163 (PAPPPPPPAPPPTT) the composition is skewed to pro residues. Low complexity predominate over residues 164–176 (EIPTATETQTVTV). Positions 177-193 (TPPPPPPPATTTAPPPA) are enriched in pro residues.

The protein belongs to the MmpS family.

It localises to the cell membrane. This Mycobacterium tuberculosis (strain CDC 1551 / Oshkosh) protein is Probable transport accessory protein MmpS3 (mmpS3).